The following is a 213-amino-acid chain: Triosephosphate isomerase (213 aa).

Position 7–9 (asparagine 7–lysine 9) interacts with substrate. Residue histidine 88 is the Electrophile of the active site. The active-site Proton acceptor is the glutamate 136. Positions 141 and 174 each coordinate substrate.

It belongs to the triosephosphate isomerase family. As to quaternary structure, homotetramer; dimer of dimers.

The protein localises to the cytoplasm. It catalyses the reaction D-glyceraldehyde 3-phosphate = dihydroxyacetone phosphate. It functions in the pathway carbohydrate biosynthesis; gluconeogenesis. The protein operates within carbohydrate degradation; glycolysis; D-glyceraldehyde 3-phosphate from glycerone phosphate: step 1/1. Functionally, involved in the gluconeogenesis. Catalyzes stereospecifically the conversion of dihydroxyacetone phosphate (DHAP) to D-glyceraldehyde-3-phosphate (G3P). This Thermoplasma volcanium (strain ATCC 51530 / DSM 4299 / JCM 9571 / NBRC 15438 / GSS1) protein is Triosephosphate isomerase.